Here is a 589-residue protein sequence, read N- to C-terminus: MQSADSQNTPKRPRRDGSPRTPPDSPLADAETSPSHDLDPDYRTWGPEQVWSFLRRCGFSDSELLKRCREKRMSGSLLPFPEDLGISSHGKKMKLLNCIQDTMKVINDPIHGHIEFHPLLMRIIDTPQFQRLRYIKQLGGGYYVFPGASHNRFEHSLGVGYLAGRLVRELSEKQPELQISERDILCVQIAGLCHDLGHGPFSHMFDGRFIPLARPEIKWTHEQGSVMMFEHLINSNGLQDVMKYYGLIPEEDILFIKEQITGPPESPIKDASKWLYKGRPKEKSFLYEIVANKRNGIDVDKWDYFARDCHHLGIQNSFDYKRFLKFARVCEVDNMKHICTREKEVGNLYDMFHTRNCLHRRAYQHKVGNIIDTMITDAFLKADDHIEITGSAGRKYHISTAIDDMEAFTKLTDNIFLEILYSTDPNLNDARMILKKIESRNLYKFVGETQPMIQRIKKENYEHLPNEVASAKPSDVELEAELKAEDLIVDVINMDYGMEDKNPIDHVRFYCKSDLSKAVMITRNQVSQFLPETFAEQLIRVYCKKTDEKTLFAARQHFVHWCLINDFTKPQIKKLPLRKLKKELTTATG.

The residue at position 1 (Met-1) is an N-acetylmethionine. The span at 1–10 (MQSADSQNTP) shows a compositional bias: polar residues. Positions 1–41 (MQSADSQNTPKRPRRDGSPRTPPDSPLADAETSPSHDLDPD) are disordered. Ser-18 bears the Phosphoserine mark. Thr-21 is subject to Phosphothreonine. A phosphoserine mark is found at Ser-33 and Ser-88. Positions 45–100 (WGPEQVWSFLRRCGFSDSELLKRCREKRMSGSLLPFPEDLGISSHGKKMKLLNCIQ) constitute an SAM domain. GTP is bound by residues Lys-104 and Val-105. Asn-107 contributes to the dGTP binding site. GTP is bound by residues Asp-125, Gln-130, and Arg-133. DGTP is bound by residues Gln-137, Leu-138, Val-144, and Arg-152. A dATP-binding site is contributed by Gln-137. Residue Gln-137 participates in dCTP binding. Position 137 (Gln-137) interacts with dTTP. Arg-152 provides a ligand contact to dATP. Position 152 (Arg-152) interacts with dCTP. Arg-152 serves as a coordination point for dTTP. Residues 152–277 (RFEHSLGVGY…IKDASKWLYK (126 aa)) form the HD domain. Residues His-155, His-194, and Asp-195 each contribute to the Mn(2+) site. His-198 and His-203 together coordinate dATP. Residues His-198 and His-203 each coordinate dCTP. DTTP contacts are provided by His-198 and His-203. The active site involves His-221. Asp-300 contributes to the Mn(2+) binding site. 12 residues coordinate dGTP: Lys-301, Tyr-304, Asp-308, Arg-322, Arg-341, Lys-343, Asn-347, Arg-355, Tyr-363, Gln-364, His-365, and Lys-366. Residues Lys-301, Tyr-304, and Asp-308 each contribute to the dATP site. Lys-301, Tyr-304, and Asp-308 together coordinate dCTP. 3 residues coordinate dTTP: Lys-301, Tyr-304, and Asp-308. Arg-355 contributes to the dATP binding site. Arg-355 contributes to the dCTP binding site. Gln-364 serves as a coordination point for dATP. Gln-364 contacts dCTP. Position 364 (Gln-364) interacts with dTTP. Positions 440 and 444 each coordinate GTP. Lys-457 participates in a covalent cross-link: Glycyl lysine isopeptide (Lys-Gly) (interchain with G-Cter in SUMO2). GTP is bound at residue Lys-512. Position 512 (Lys-512) interacts with dGTP.

Belongs to the SAMHD1 family. As to quaternary structure, homodimer; in absence of GTP and dNTP. Homotetramer; in GTP- and dNTP-bound form. Interacts with MRE11; leading to stimulate the exonuclease activity of MRE11. Interacts with RBBP8/CtIP. Interacts (via its C-terminus) with CD81. The cofactor is Zn(2+).

The protein resides in the nucleus. It is found in the chromosome. The enzyme catalyses a 2'-deoxyribonucleoside 5'-triphosphate + H2O = a 2'-deoxyribonucleoside + triphosphate + H(+). The catalysed reaction is dATP + H2O = 2'-deoxyadenosine + triphosphate + H(+). It carries out the reaction dCTP + H2O = 2'-deoxycytidine + triphosphate + H(+). It catalyses the reaction dGTP + H2O = 2'-deoxyguanosine + triphosphate + H(+). The enzyme catalyses dTTP + H2O = thymidine + triphosphate + H(+). With respect to regulation, allosterically activated and regulated via the combined actions of GTP and dNTPs (dATP, dGTP, dTTP and dCTP): Allosteric site 1 binds GTP, while allosteric site 2 binds dNTP. Allosteric activation promotes the formation of highly active homotetramers. In terms of biological role, protein that acts both as a host restriction factor involved in defense response to virus and as a regulator of DNA end resection at stalled replication forks. Has deoxynucleoside triphosphate (dNTPase) activity, which is required to restrict infection by viruses: dNTPase activity reduces cellular dNTP levels to levels too low for retroviral reverse transcription to occur, blocking early-stage virus replication in dendritic and other myeloid cells. Likewise, suppresses LINE-1 retrotransposon activity. In addition to virus restriction, dNTPase activity acts as a regulator of DNA precursor pools by regulating dNTP pools. Functions during S phase at stalled DNA replication forks to promote the resection of gapped or reversed forks: acts by stimulating the exonuclease activity of MRE11, activating the ATR-CHK1 pathway and allowing the forks to restart replication. Its ability to promote degradation of nascent DNA at stalled replication forks is required to prevent induction of type I interferons, thereby preventing chronic inflammation. Ability to promote DNA end resection at stalled replication forks is independent of dNTPase activity. Enhances immunoglobulin hypermutation in B-lymphocytes by promoting transversion mutation. This is Deoxynucleoside triphosphate triphosphohydrolase SAMHD1 from Bos taurus (Bovine).